The chain runs to 144 residues: Sec-independent protein translocase protein TatB (144 aa).

A helical membrane pass occupies residues 1-21 (MFEIGFWELVLVAIIGIVVVG). The disordered stretch occupies residues 97–144 (KMIDEPPYQEPPPAAHSVQTDAEAYRDTGIEPADKSSSPEHHHDDAAR). A compositionally biased stretch (basic and acidic residues) spans 119-144 (EAYRDTGIEPADKSSSPEHHHDDAAR).

It belongs to the TatB family. In terms of assembly, the Tat system comprises two distinct complexes: a TatABC complex, containing multiple copies of TatA, TatB and TatC subunits, and a separate TatA complex, containing only TatA subunits. Substrates initially bind to the TatABC complex, which probably triggers association of the separate TatA complex to form the active translocon.

Its subcellular location is the cell inner membrane. Part of the twin-arginine translocation (Tat) system that transports large folded proteins containing a characteristic twin-arginine motif in their signal peptide across membranes. Together with TatC, TatB is part of a receptor directly interacting with Tat signal peptides. TatB may form an oligomeric binding site that transiently accommodates folded Tat precursor proteins before their translocation. In Dichelobacter nodosus (strain VCS1703A), this protein is Sec-independent protein translocase protein TatB.